Consider the following 214-residue polypeptide: Probable nicotinate-nucleotide adenylyltransferase (214 aa).

The protein belongs to the NadD family.

It carries out the reaction nicotinate beta-D-ribonucleotide + ATP + H(+) = deamido-NAD(+) + diphosphate. It participates in cofactor biosynthesis; NAD(+) biosynthesis; deamido-NAD(+) from nicotinate D-ribonucleotide: step 1/1. In terms of biological role, catalyzes the reversible adenylation of nicotinate mononucleotide (NaMN) to nicotinic acid adenine dinucleotide (NaAD). The chain is Probable nicotinate-nucleotide adenylyltransferase from Thermomicrobium roseum (strain ATCC 27502 / DSM 5159 / P-2).